A 732-amino-acid chain; its full sequence is Catalase-peroxidase (732 aa).

Residues Met1 to Met23 are disordered. The segment at residues Trp97 to Tyr220 is a cross-link (tryptophyl-tyrosyl-methioninium (Trp-Tyr) (with M-246)). His98 (proton acceptor) is an active-site residue. The tryptophyl-tyrosyl-methioninium (Tyr-Met) (with W-97) cross-link spans Tyr220–Met246. A heme b-binding site is contributed by His261.

This sequence belongs to the peroxidase family. Peroxidase/catalase subfamily. As to quaternary structure, homodimer or homotetramer. Requires heme b as cofactor. Formation of the three residue Trp-Tyr-Met cross-link is important for the catalase, but not the peroxidase activity of the enzyme.

It catalyses the reaction H2O2 + AH2 = A + 2 H2O. The enzyme catalyses 2 H2O2 = O2 + 2 H2O. In terms of biological role, bifunctional enzyme with both catalase and broad-spectrum peroxidase activity. The polypeptide is Catalase-peroxidase (Chlorobium limicola (strain DSM 245 / NBRC 103803 / 6330)).